The chain runs to 461 residues: Trigger factor (461 aa).

Residues 166–245 (GDFANIDLTA…VNSVKAEELP (80 aa)) enclose the PPIase FKBP-type domain.

This sequence belongs to the FKBP-type PPIase family. Tig subfamily.

It is found in the cytoplasm. The catalysed reaction is [protein]-peptidylproline (omega=180) = [protein]-peptidylproline (omega=0). Involved in protein export. Acts as a chaperone by maintaining the newly synthesized protein in an open conformation. Functions as a peptidyl-prolyl cis-trans isomerase. The chain is Trigger factor from Bifidobacterium animalis subsp. lactis (strain AD011).